The primary structure comprises 142 residues: Glia maturation factor beta (142 aa).

At Ser2 the chain carries N-acetylserine. An ADF-H domain is found at 4–139 (SLVVCDVAED…TEEWLREKLG (136 aa)).

Belongs to the actin-binding proteins ADF family. GMF subfamily. In terms of processing, phosphorylated; stimulated by phorbol ester.

Its function is as follows. This protein causes differentiation of brain cells, stimulation of neural regeneration, and inhibition of proliferation of tumor cells. The chain is Glia maturation factor beta (Gmfb) from Mus musculus (Mouse).